A 161-amino-acid polypeptide reads, in one-letter code: MTEQANSGAAAAESQNPQFSLQRIYVKDLSFEAPKSPEIFRQEWTPSVGLDLNTRQKTLEGDFHEVVLTLSVTVKNGEEVAFIAEVQQAGIFLIKGLDAASMSHTLGAFCPNILFPYAREALDSLVTRGSFPALMLSPVNFDALYAQELQRMQQAGEAAAH.

This sequence belongs to the SecB family. As to quaternary structure, homotetramer, a dimer of dimers. One homotetramer interacts with 1 SecA dimer.

The protein localises to the cytoplasm. Its function is as follows. One of the proteins required for the normal export of preproteins out of the cell cytoplasm. It is a molecular chaperone that binds to a subset of precursor proteins, maintaining them in a translocation-competent state. It also specifically binds to its receptor SecA. This is Protein-export protein SecB from Ectopseudomonas mendocina (strain ymp) (Pseudomonas mendocina).